Consider the following 335-residue polypeptide: Ferrochelatase (335 aa).

Positions 207 and 288 each coordinate Fe cation.

This sequence belongs to the ferrochelatase family.

The protein resides in the cytoplasm. It carries out the reaction heme b + 2 H(+) = protoporphyrin IX + Fe(2+). The protein operates within porphyrin-containing compound metabolism; protoheme biosynthesis; protoheme from protoporphyrin-IX: step 1/1. In terms of biological role, catalyzes the ferrous insertion into protoporphyrin IX. This Helicobacter pylori (strain J99 / ATCC 700824) (Campylobacter pylori J99) protein is Ferrochelatase.